We begin with the raw amino-acid sequence, 363 residues long: Spermidine/putrescine import ATP-binding protein PotA (363 aa).

An ABC transporter domain is found at 4–234; the sequence is LEIRNVTRRF…PRNHFVADFI (231 aa). An ATP-binding site is contributed by 36–43; that stretch reads GPSGCGKT.

The protein belongs to the ABC transporter superfamily. Spermidine/putrescine importer (TC 3.A.1.11.1) family. The complex is composed of two ATP-binding proteins (PotA), two transmembrane proteins (PotB and PotC) and a solute-binding protein (PotD).

The protein resides in the cell inner membrane. The enzyme catalyses ATP + H2O + polyamine-[polyamine-binding protein]Side 1 = ADP + phosphate + polyamineSide 2 + [polyamine-binding protein]Side 1.. Part of the ABC transporter complex PotABCD involved in spermidine/putrescine import. Responsible for energy coupling to the transport system. The sequence is that of Spermidine/putrescine import ATP-binding protein PotA from Nitrosospira multiformis (strain ATCC 25196 / NCIMB 11849 / C 71).